The following is an 830-amino-acid chain: Formin-like protein 14 (830 aa).

Residues 1 to 34 form the signal peptide; the sequence is MAMAMAMPSSSPPLFFSLLNLMLLLLLLAPYCSA. Positions 40–59 are enriched in polar residues; sequence NNTHHRSSSPTQTTLQQLHS. The interval 40–195 is disordered; the sequence is NNTHHRSSSP…NISTLVHPTQ (156 aa). 2 stretches are compositionally biased toward pro residues: residues 61-86 and 95-135; these read DSPP…PAPR and PPPP…PTPK. Over residues 149–160 the composition is skewed to low complexity; sequence YPFTNYPFFPNF. The chain crosses the membrane as a helical span at residues 203–223; that stretch reads VLQALLLSFLSLCLLLLSALL. Positions 235-446 are disordered; the sequence is HHSHSHPNAR…LHSDKLKPGS (212 aa). The segment covering 314–323 has biased composition (pro residues); sequence RPLPPLPRVG. Residues 324–369 show a composition bias toward low complexity; the sequence is PPSGEFASRSSASDPSTAPPAAAEASSSSLSPSSPSASSPTLGSSP. Residues 390–823 enclose the FH2 domain; the sequence is PKRRPQPPEP…MMGRDWNMAA (434 aa). Over residues 424 to 446 the composition is skewed to basic and acidic residues; that stretch reads HSPSEKSMRKSRPLHSDKLKPGS.

The protein belongs to the formin-like family. Class-I subfamily.

It is found in the membrane. This chain is Formin-like protein 14 (FH14), found in Oryza sativa subsp. japonica (Rice).